The primary structure comprises 257 residues: UPF0246 protein YaaA (257 aa).

Belongs to the UPF0246 family.

The protein is UPF0246 protein YaaA of Salmonella schwarzengrund (strain CVM19633).